The sequence spans 185 residues: Transcription termination/antitermination protein NusG (185 aa).

Residues 134–162 form the KOW domain; it reads PGQMVRVIDGPFNDFDGLVEEVNYEKNRL.

Belongs to the NusG family.

Functionally, participates in transcription elongation, termination and antitermination. The sequence is that of Transcription termination/antitermination protein NusG from Xylella fastidiosa (strain 9a5c).